We begin with the raw amino-acid sequence, 776 residues long: Protein translocase subunit SecA 2 (776 aa).

Residues Q80, 98–102 (GEGKT), and D486 contribute to the ATP site.

Belongs to the SecA family. Monomer and homodimer. Part of the essential Sec protein translocation apparatus which comprises SecA, SecYEG and auxiliary proteins SecDF. Other proteins may also be involved.

The protein localises to the cell membrane. The protein resides in the cytoplasm. The enzyme catalyses ATP + H2O + cellular proteinSide 1 = ADP + phosphate + cellular proteinSide 2.. Its function is as follows. Part of the Sec protein translocase complex. Interacts with the SecYEG preprotein conducting channel. Has a central role in coupling the hydrolysis of ATP to the transfer of proteins into and across the cell membrane, serving as an ATP-driven molecular motor driving the stepwise translocation of polypeptide chains across the membrane. This chain is Protein translocase subunit SecA 2, found in Listeria monocytogenes serotype 1/2a (strain 10403S).